Reading from the N-terminus, the 153-residue chain is Gastric inhibitory polypeptide (153 aa).

Residues 1–21 (MVATKTFALLLLSLFLAVGLG) form the signal peptide. 2 consecutive propeptides follow at residues 22 to 50 (EKKEGHFSALPSLPVGSHAKVSSPQPRGP) and 95 to 153 (EARA…LRSR). The disordered stretch occupies residues 102-125 (ASQANRKEEEAVEPQSSPAKNPSD).

Belongs to the glucagon family.

The protein localises to the secreted. In terms of biological role, potent stimulator of insulin secretion and relatively poor inhibitor of gastric acid secretion. In Homo sapiens (Human), this protein is Gastric inhibitory polypeptide (GIP).